A 121-amino-acid polypeptide reads, in one-letter code: Large ribosomal subunit protein uL14c (121 aa).

The protein belongs to the universal ribosomal protein uL14 family. As to quaternary structure, part of the 50S ribosomal subunit.

The protein localises to the plastid. Its subcellular location is the chloroplast. In terms of biological role, binds to 23S rRNA. This chain is Large ribosomal subunit protein uL14c, found in Nephroselmis olivacea (Green alga).